A 264-amino-acid chain; its full sequence is MRIALGISYSGSAYEGWQSQLSGNTVQDKLESALARFAAQPVRTLCAGRTDAGVHGLMQVVHFDTVLHRDMGSWVRGTNAFLPSDIAVQWAREVPDTFHCRGSAIARRYAYVVLESPVRPSVEAGRVGWVYRPLDGAAMRQAITHLVGEHDFSSFRAAQCQAKSPVKTINRIEISERAGTGSKYWHFEFEANAFLHHMIRNIMGCLVAIGQGSHEPGWLLDVMAARSRDAAAPTFSPNGLYFLGPVYEDHYGLPNRTAAYDWLP.

Catalysis depends on Asp51, which acts as the Nucleophile. Tyr109 contacts substrate.

Belongs to the tRNA pseudouridine synthase TruA family. In terms of assembly, homodimer.

The catalysed reaction is uridine(38/39/40) in tRNA = pseudouridine(38/39/40) in tRNA. Its function is as follows. Formation of pseudouridine at positions 38, 39 and 40 in the anticodon stem and loop of transfer RNAs. The chain is tRNA pseudouridine synthase A from Polaromonas sp. (strain JS666 / ATCC BAA-500).